A 96-amino-acid chain; its full sequence is Mitochondrial import inner membrane translocase subunit Tim13-B (96 aa).

The short motif at 47 to 70 is the Twin CX3C motif element; the sequence is CFRKCIGKPGGSLDNSEQKCVAMC. 2 disulfide bridges follow: C47–C70 and C51–C66.

The protein belongs to the small Tim family. In terms of assembly, heterohexamer; composed of 3 copies of TIMM8 (TIMM8A or TIMM8B) and 3 copies of TIMM13, named soluble 70 kDa complex. Associates with the TIM22 complex, whose core is composed of TIMM22.

The protein localises to the mitochondrion inner membrane. Its function is as follows. Mitochondrial intermembrane chaperone that participates in the import and insertion of some multi-pass transmembrane proteins into the mitochondrial inner membrane. Also required for the transfer of beta-barrel precursors from the TOM complex to the sorting and assembly machinery (SAM complex) of the outer membrane. Acts as a chaperone-like protein that protects the hydrophobic precursors from aggregation and guide them through the mitochondrial intermembrane space. The TIMM8-TIMM13 complex mediates the import of some proteins while the predominant TIMM9-TIMM10 70 kDa complex mediates the import of much more proteins. The protein is Mitochondrial import inner membrane translocase subunit Tim13-B (timm13-b) of Xenopus laevis (African clawed frog).